We begin with the raw amino-acid sequence, 1037 residues long: Sentrin-specific protease 7 (1037 aa).

The segment covering 1–10 has biased composition (basic residues); sequence MDRARPGRRR. Disordered stretches follow at residues 1–28 and 182–420; these read MDRA…SPAD and ASLS…SEEN. Residues Ser-12, Ser-13, Ser-25, and Ser-189 each carry the phosphoserine modification. 2 stretches are compositionally biased toward polar residues: residues 182–211 and 253–263; these read ASLS…NVNH and TPQSKDFNSGN. The segment covering 289–299 has biased composition (basic residues); it reads VSRKRKKRGRS. Over residues 300-309 the composition is skewed to polar residues; sequence NFHNSHNPKS. Basic and acidic residues-rich tracts occupy residues 310–320 and 330–340; these read SVDKSTEYIKE and KLEESNEDSHQ. Residues 381–399 are compositionally biased toward low complexity; that stretch reads NKSSESSVSSEVAENSSAA. A phosphoserine mark is found at Ser-432 and Ser-433. The interval 747–1037 is protease; it reads LGVTNEDLEC…HLQQQKGSSS (291 aa). His-847 is a catalytic residue. The disordered stretch occupies residues 873–910; the sequence is EFQDQQSQHDNKTIDNDPHTTSTVFTSAEESQSTETSM. A compositionally biased stretch (basic and acidic residues) spans 879–890; that stretch reads SQHDNKTIDNDP. Residues 898–910 show a composition bias toward low complexity; sequence TSAEESQSTETSM. Asp-926 is an active-site residue. Residue Cys-979 is the Nucleophile of the active site.

Belongs to the peptidase C48 family.

The protein resides in the cytoplasm. Functionally, protease that acts as a positive regulator of the cGAS-STING pathway by catalyzing desumoylation of CGAS. Desumoylation of CGAS promotes DNA-binding activity of CGAS, subsequent oligomerization and activation. Deconjugates SUMO2 and SUMO3 from targeted proteins, but not SUMO1. Catalyzes the deconjugation of poly-SUMO2 and poly-SUMO3 chains. Has very low efficiency in processing full-length SUMO proteins to their mature forms. In Rattus norvegicus (Rat), this protein is Sentrin-specific protease 7 (Senp7).